The following is a 270-amino-acid chain: Putative pyruvate, phosphate dikinase regulatory protein (270 aa).

149–156 (GVSRTSKT) contacts ADP.

It belongs to the pyruvate, phosphate/water dikinase regulatory protein family. PDRP subfamily.

The catalysed reaction is N(tele)-phospho-L-histidyl/L-threonyl-[pyruvate, phosphate dikinase] + ADP = N(tele)-phospho-L-histidyl/O-phospho-L-threonyl-[pyruvate, phosphate dikinase] + AMP + H(+). It catalyses the reaction N(tele)-phospho-L-histidyl/O-phospho-L-threonyl-[pyruvate, phosphate dikinase] + phosphate + H(+) = N(tele)-phospho-L-histidyl/L-threonyl-[pyruvate, phosphate dikinase] + diphosphate. Bifunctional serine/threonine kinase and phosphorylase involved in the regulation of the pyruvate, phosphate dikinase (PPDK) by catalyzing its phosphorylation/dephosphorylation. The chain is Putative pyruvate, phosphate dikinase regulatory protein from Thermoanaerobacter pseudethanolicus (strain ATCC 33223 / 39E) (Clostridium thermohydrosulfuricum).